Consider the following 97-residue polypeptide: Putative membrane protein insertion efficiency factor (97 aa).

A disordered region spans residues 77 to 97; sequence VPDAPASPSPSSSCSCKGPHP. The segment covering 85–97 has biased composition (low complexity); it reads SPSSSCSCKGPHP.

It belongs to the UPF0161 family.

It is found in the cell inner membrane. Functionally, could be involved in insertion of integral membrane proteins into the membrane. The polypeptide is Putative membrane protein insertion efficiency factor (Xanthomonas euvesicatoria pv. vesicatoria (strain 85-10) (Xanthomonas campestris pv. vesicatoria)).